A 707-amino-acid polypeptide reads, in one-letter code: Leucine-rich repeat neuronal protein 3 (707 aa).

An N-terminal signal peptide occupies residues 1–22 (MKDTPLQVHVLLGLAITTLVQA). The LRRNT domain occupies 23 to 69 (IDKKVDCPQLCTCEIRPWFTPRSIYMEASTVDCNDLGLLNFPARLPA). Topologically, residues 23-626 (IDKKVDCPQL…DGKEYGKNHT (604 aa)) are extracellular. 12 LRR repeats span residues 70-91 (DTQI…TDFP), 93-114 (NLTG…NVQK), 117-138 (QLLS…CLYG), 141-162 (NLQE…AFIG), 165-186 (NLLR…WFDA), 189-210 (NLEI…NFQP), 213-234 (KLRS…ALAG), 237-258 (NLES…ALQK), 261-282 (NLKF…DFSN), 285-304 (HLKE…DSLA), 310-332 (DLRK…AFFR), and 335-358 (KLES…ESLP). Residues Asn93 and Asn103 are each glycosylated (N-linked (GlcNAc...) asparagine). Asn223 carries N-linked (GlcNAc...) asparagine glycosylation. The region spanning 368-421 (NPIRCDCVIRWINMNKTNIRFMEPDSLFCVDPPEFQGQNVRQVHFRDMMEICLP) is the LRRCT domain. Asn382 carries N-linked (GlcNAc...) asparagine glycosylation. The region spanning 421-514 (PLIAPESFPS…DLKSIMIKVG (94 aa)) is the Ig-like C2-type domain. An intrachain disulfide couples Cys444 to Cys496. N-linked (GlcNAc...) asparagine glycans are attached at residues Asn522, Asn579, Asn608, and Asn624. Residues 523–614 (GSLNIKIRDI…QCVNVTTKSL (92 aa)) enclose the Fibronectin type-III domain. A helical membrane pass occupies residues 627 to 647 (VFVACVGGLLGIIGVMCLFSC). The Cytoplasmic segment spans residues 648-707 (VSQEGSSEGEHSYAVNHCHKPALAFSELYPPLINLWESSKEKRATLEVKATAIGVPTNMS).

As to expression, expressed in the brain, in Stronger expression in the ventricular zone and anlage of thalamus, spinal cord, and dorsal root ganglion in 11-17 dpc cerebellum and cerebral cortex in adults.

The protein resides in the membrane. The chain is Leucine-rich repeat neuronal protein 3 (Lrrn3) from Mus musculus (Mouse).